Here is a 399-residue protein sequence, read N- to C-terminus: Methylthioribose kinase (399 aa).

ATP-binding positions include Asn-40, Lys-57, and 111–113; that span reads EDL. Residue Asp-229 coordinates substrate. 246–248 lines the ATP pocket; that stretch reads DAE. Residue Arg-344 participates in substrate binding.

This sequence belongs to the methylthioribose kinase family. Homodimer.

The enzyme catalyses 5-(methylsulfanyl)-D-ribose + ATP = 5-(methylsulfanyl)-alpha-D-ribose 1-phosphate + ADP + H(+). Its pathway is amino-acid biosynthesis; L-methionine biosynthesis via salvage pathway; S-methyl-5-thio-alpha-D-ribose 1-phosphate from S-methyl-5'-thioadenosine (hydrolase route): step 2/2. Its function is as follows. Catalyzes the phosphorylation of methylthioribose into methylthioribose-1-phosphate. This chain is Methylthioribose kinase, found in Klebsiella pneumoniae subsp. pneumoniae (strain ATCC 700721 / MGH 78578).